Here is a 224-residue protein sequence, read N- to C-terminus: ATP-dependent dethiobiotin synthetase BioD (224 aa).

Position 13–18 (Asn13–Ile18) interacts with ATP. Thr17 is a Mg(2+) binding site. Residue Lys38 is part of the active site. Residue Ser42 coordinates substrate. Residues Asp55, Glu116–Gly119, Asn176–Asn177, and Asn211 contribute to the ATP site. Mg(2+)-binding residues include Asp55 and Glu116.

It belongs to the dethiobiotin synthetase family. Homodimer. Mg(2+) is required as a cofactor.

The protein localises to the cytoplasm. It catalyses the reaction (7R,8S)-7,8-diammoniononanoate + CO2 + ATP = (4R,5S)-dethiobiotin + ADP + phosphate + 3 H(+). It participates in cofactor biosynthesis; biotin biosynthesis; biotin from 7,8-diaminononanoate: step 1/2. Functionally, catalyzes a mechanistically unusual reaction, the ATP-dependent insertion of CO2 between the N7 and N8 nitrogen atoms of 7,8-diaminopelargonic acid (DAPA, also called 7,8-diammoniononanoate) to form a ureido ring. In Buchnera aphidicola subsp. Acyrthosiphon pisum (strain APS) (Acyrthosiphon pisum symbiotic bacterium), this protein is ATP-dependent dethiobiotin synthetase BioD.